The chain runs to 517 residues: Maturase K (517 aa).

This sequence belongs to the intron maturase 2 family. MatK subfamily.

The protein localises to the plastid. The protein resides in the chloroplast. Its function is as follows. Usually encoded in the trnK tRNA gene intron. Probably assists in splicing its own and other chloroplast group II introns. This is Maturase K from Caryota mitis (Burmese fishtail palm).